We begin with the raw amino-acid sequence, 521 residues long: UPF0053 protein BU323 (521 aa).

7 helical membrane passes run Leu-13–Ile-33, Ile-49–Val-69, Phe-80–Lys-100, Phe-125–Ile-145, Met-150–Leu-170, Val-185–Leu-205, and Phe-207–Phe-227. CBS domains follow at residues Met-311–Ala-370 and Ser-374–Glu-434.

It belongs to the UPF0053 family.

The protein resides in the cell membrane. The chain is UPF0053 protein BU323 from Buchnera aphidicola subsp. Acyrthosiphon pisum (strain APS) (Acyrthosiphon pisum symbiotic bacterium).